Here is a 20-residue protein sequence, read N- to C-terminus: Ranalexin-1Ca (20 aa).

Cysteines 14 and 20 form a disulfide.

In terms of tissue distribution, expressed by the skin glands.

Its subcellular location is the secreted. Antibacterial activity against Gram-positive bacterium S.aureus (MIC=17 uM) and Gram-negative bacterium E.coli (MIC=4 uM). Has activity against C.albicans (MIC=14 uM). The protein is Ranalexin-1Ca of Lithobates clamitans (Green frog).